The chain runs to 105 residues: Large ribosomal subunit protein eL33 (105 aa).

Belongs to the eukaryotic ribosomal protein eL33 family.

The protein was found to bind to both initiator and elongator tRNAs and consequently was assigned to the P site or P and A site. In Dictyostelium discoideum (Social amoeba), this protein is Large ribosomal subunit protein eL33 (rpl35a).